Consider the following 100-residue polypeptide: Small ribosomal subunit protein uS14c (100 aa).

Belongs to the universal ribosomal protein uS14 family. In terms of assembly, part of the 30S ribosomal subunit.

It localises to the plastid. Functionally, binds 16S rRNA, required for the assembly of 30S particles. The sequence is that of Small ribosomal subunit protein uS14c (rps14) from Cuscuta gronovii (Common dodder).